We begin with the raw amino-acid sequence, 319 residues long: Acetyl esterase (319 aa).

The Involved in the stabilization of the negatively charged intermediate by the formation of the oxyanion hole motif lies at 91 to 93; sequence HGG. Residues serine 165, aspartate 262, and histidine 292 contribute to the active site.

This sequence belongs to the 'GDXG' lipolytic enzyme family. Homodimer. Interacts with MalT and MelA.

The protein localises to the cytoplasm. In terms of biological role, displays esterase activity towards short chain fatty esters (acyl chain length of up to 8 carbons). Able to hydrolyze triacetylglycerol (triacetin) and tributyrylglycerol (tributyrin), but not trioleylglycerol (triolein) or cholesterol oleate. Negatively regulates MalT activity by antagonizing maltotriose binding. Inhibits MelA galactosidase activity. The protein is Acetyl esterase of Escherichia coli O139:H28 (strain E24377A / ETEC).